The following is a 492-amino-acid chain: Malonate-semialdehyde dehydrogenase (492 aa).

NAD(+)-binding residues include Phe156, Lys180, Glu183, Lys184, Ser233, and Thr255. Catalysis depends on Cys288, which acts as the Nucleophile. Residue Glu387 coordinates NAD(+).

It belongs to the aldehyde dehydrogenase family. IolA subfamily. As to quaternary structure, homotetramer.

The catalysed reaction is 3-oxopropanoate + NAD(+) + CoA + H2O = hydrogencarbonate + acetyl-CoA + NADH + H(+). It catalyses the reaction 2-methyl-3-oxopropanoate + NAD(+) + CoA + H2O = propanoyl-CoA + hydrogencarbonate + NADH + H(+). Its pathway is polyol metabolism; myo-inositol degradation into acetyl-CoA; acetyl-CoA from myo-inositol: step 7/7. In terms of biological role, catalyzes the oxidation of malonate semialdehyde (MSA) and methylmalonate semialdehyde (MMSA) into acetyl-CoA and propanoyl-CoA, respectively. Is involved in a myo-inositol catabolic pathway. Bicarbonate, and not CO2, is the end-product of the enzymatic reaction. The polypeptide is Malonate-semialdehyde dehydrogenase (Lacticaseibacillus casei (Lactobacillus casei)).